The sequence spans 413 residues: Multifunctional CCA protein (413 aa).

Residues glycine 8 and arginine 11 each coordinate ATP. The CTP site is built by glycine 8 and arginine 11. Aspartate 21 and aspartate 23 together coordinate Mg(2+). The ATP site is built by arginine 91, arginine 137, and arginine 140. Residues arginine 91, arginine 137, and arginine 140 each contribute to the CTP site. An HD domain is found at 228–329; it reads TGIHTLMTLS…VKLFDSIDAW (102 aa).

It belongs to the tRNA nucleotidyltransferase/poly(A) polymerase family. Bacterial CCA-adding enzyme type 1 subfamily. Monomer. Can also form homodimers and oligomers. Mg(2+) is required as a cofactor. It depends on Ni(2+) as a cofactor.

It carries out the reaction a tRNA precursor + 2 CTP + ATP = a tRNA with a 3' CCA end + 3 diphosphate. The catalysed reaction is a tRNA with a 3' CCA end + 2 CTP + ATP = a tRNA with a 3' CCACCA end + 3 diphosphate. In terms of biological role, catalyzes the addition and repair of the essential 3'-terminal CCA sequence in tRNAs without using a nucleic acid template. Adds these three nucleotides in the order of C, C, and A to the tRNA nucleotide-73, using CTP and ATP as substrates and producing inorganic pyrophosphate. tRNA 3'-terminal CCA addition is required both for tRNA processing and repair. Also involved in tRNA surveillance by mediating tandem CCA addition to generate a CCACCA at the 3' terminus of unstable tRNAs. While stable tRNAs receive only 3'-terminal CCA, unstable tRNAs are marked with CCACCA and rapidly degraded. In Citrobacter koseri (strain ATCC BAA-895 / CDC 4225-83 / SGSC4696), this protein is Multifunctional CCA protein.